Here is a 339-residue protein sequence, read N- to C-terminus: Ketol-acid reductoisomerase (NADP(+)) (339 aa).

The 182-residue stretch at 1–182 folds into the KARI N-terminal Rossmann domain; it reads MRVYYDRDAD…GGGRAGIIET (182 aa). NADP(+) contacts are provided by residues 24–27, R48, S51, T53, and 83–86; these read YGSQ and DELQ. Residue H108 is part of the active site. G134 is an NADP(+) binding site. The KARI C-terminal knotted domain maps to 183 to 328; that stretch reads TFREECETDL…AKLRAMMPWI (146 aa). The Mg(2+) site is built by D191, E195, E227, and E231. S252 contributes to the substrate binding site.

It belongs to the ketol-acid reductoisomerase family. Mg(2+) is required as a cofactor.

The catalysed reaction is (2R)-2,3-dihydroxy-3-methylbutanoate + NADP(+) = (2S)-2-acetolactate + NADPH + H(+). It catalyses the reaction (2R,3R)-2,3-dihydroxy-3-methylpentanoate + NADP(+) = (S)-2-ethyl-2-hydroxy-3-oxobutanoate + NADPH + H(+). The protein operates within amino-acid biosynthesis; L-isoleucine biosynthesis; L-isoleucine from 2-oxobutanoate: step 2/4. It functions in the pathway amino-acid biosynthesis; L-valine biosynthesis; L-valine from pyruvate: step 2/4. Involved in the biosynthesis of branched-chain amino acids (BCAA). Catalyzes an alkyl-migration followed by a ketol-acid reduction of (S)-2-acetolactate (S2AL) to yield (R)-2,3-dihydroxy-isovalerate. In the isomerase reaction, S2AL is rearranged via a Mg-dependent methyl migration to produce 3-hydroxy-3-methyl-2-ketobutyrate (HMKB). In the reductase reaction, this 2-ketoacid undergoes a metal-dependent reduction by NADPH to yield (R)-2,3-dihydroxy-isovalerate. This is Ketol-acid reductoisomerase (NADP(+)) from Methylocella silvestris (strain DSM 15510 / CIP 108128 / LMG 27833 / NCIMB 13906 / BL2).